The sequence spans 669 residues: Dynamin-related protein 4C (669 aa).

The interval 1 to 21 (MVKKKVATKKNSPSLAIAKKK) is disordered. The region spanning 62 to 323 (GIHLPTIVVV…QSSMIARCLP (262 aa)) is the Dynamin-type G domain. The G1 motif stretch occupies residues 72–79 (GDQSSGKS). 72–79 (GDQSSGKS) is a binding site for GTP. The interval 97–99 (CTR) is G2 motif. Residues 171-174 (DLPG) are G3 motif. GTP is bound by residues 171 to 175 (DLPGI) and 240 to 243 (TKAD). A G4 motif region spans residues 240–243 (TKAD). Residue glutamate 273 is a region of interest, G5 motif. The GED domain occupies 575 to 669 (AFDMKMRITS…AVAAIVDQNC (95 aa)).

It belongs to the TRAFAC class dynamin-like GTPase superfamily. Dynamin/Fzo/YdjA family.

The protein localises to the cytoplasm. Its subcellular location is the cytoskeleton. In terms of biological role, putative microtubule-associated force-producing protein, able to bind and hydrolyze GTP. The sequence is that of Dynamin-related protein 4C (DRP4C) from Arabidopsis thaliana (Mouse-ear cress).